A 467-amino-acid chain; its full sequence is Probable citrate synthase 2, mitochondrial (467 aa).

Catalysis depends on residues His-303, His-349, and Asp-404.

It belongs to the citrate synthase family. Homodimer.

It is found in the mitochondrion matrix. The enzyme catalyses oxaloacetate + acetyl-CoA + H2O = citrate + CoA + H(+). It functions in the pathway carbohydrate metabolism; tricarboxylic acid cycle; isocitrate from oxaloacetate: step 1/2. This chain is Probable citrate synthase 2, mitochondrial, found in Aedes aegypti (Yellowfever mosquito).